The chain runs to 451 residues: Aspartate aminotransferase, mitochondrial (451 aa).

L-aspartate is bound by residues Gly-52, Trp-155, and Asn-216. An N6-(pyridoxal phosphate)lysine modification is found at Lys-286. Arg-423 provides a ligand contact to L-aspartate.

The protein belongs to the class-I pyridoxal-phosphate-dependent aminotransferase family. In terms of assembly, homodimer. Pyridoxal 5'-phosphate is required as a cofactor.

It is found in the mitochondrion matrix. The enzyme catalyses L-aspartate + 2-oxoglutarate = oxaloacetate + L-glutamate. Functionally, plays a key role in amino acid metabolism. Important for metabolite exchange between mitochondria and cytosol. The sequence is that of Aspartate aminotransferase, mitochondrial (AAT1) from Saccharomyces cerevisiae (strain ATCC 204508 / S288c) (Baker's yeast).